Consider the following 286-residue polypeptide: Nucleotide-binding protein Tgr7_0722 (286 aa).

ATP is bound at residue 8–15 (GLSGSGKS). Residue 60-63 (DVRS) participates in GTP binding.

It belongs to the RapZ-like family.

Displays ATPase and GTPase activities. In Thioalkalivibrio sulfidiphilus (strain HL-EbGR7), this protein is Nucleotide-binding protein Tgr7_0722.